The sequence spans 224 residues: Ribonuclease T (224 aa).

The region spanning 20–194 (VVIDVETAGF…YDTERTAELF (175 aa)) is the Exonuclease domain. The Mg(2+) site is built by aspartate 23, glutamate 25, histidine 181, and aspartate 186. Histidine 181 acts as the Proton donor/acceptor in catalysis.

The protein belongs to the RNase T family. In terms of assembly, homodimer. Requires Mg(2+) as cofactor.

Trims short 3' overhangs of a variety of RNA species, leaving a one or two nucleotide 3' overhang. Responsible for the end-turnover of tRNA: specifically removes the terminal AMP residue from uncharged tRNA (tRNA-C-C-A). Also appears to be involved in tRNA biosynthesis. The polypeptide is Ribonuclease T (Shewanella putrefaciens (strain CN-32 / ATCC BAA-453)).